The following is a 531-amino-acid chain: Putative lipase ATG15 (531 aa).

At 1-11 the chain is on the cytoplasmic side; sequence MKPGIKISKRY. A helical; Signal-anchor for type II membrane protein membrane pass occupies residues 12 to 31; it reads SARNASVITVLLLLIYLIYI. Over 32–531 the chain is Lumenal; the sequence is NKETIQTKYQ…WIGICTEYGI (500 aa). N-linked (GlcNAc...) asparagine glycosylation is found at N178 and N207. Catalysis depends on S340, which acts as the Charge relay system. The interval 482 to 513 is disordered; the sequence is VPKKHKSSSSTASSTSAETSTLTVGPSPPEKT. The span at 489–502 shows a compositional bias: low complexity; the sequence is SSSTASSTSAETST.

It belongs to the AB hydrolase superfamily. Lipase family. Binds to both phosphatidylinositol (PI) and phosphatidylinositol 3,5-bisphosphate (PIP2).

The protein resides in the endosome. The protein localises to the multivesicular body membrane. It localises to the prevacuolar compartment membrane. It carries out the reaction a triacylglycerol + H2O = a diacylglycerol + a fatty acid + H(+). In terms of biological role, lipase which is essential for lysis of subvacuolar cytoplasm to vacuole targeted bodies and intravacuolar autophagic bodies. Involved in the lysis of intravacuolar multivesicular body (MVB) vesicles. The intravacuolar membrane disintegration by ATG15 is critical to life span extension. The protein is Putative lipase ATG15 (ATG15) of Kluyveromyces lactis (strain ATCC 8585 / CBS 2359 / DSM 70799 / NBRC 1267 / NRRL Y-1140 / WM37) (Yeast).